Reading from the N-terminus, the 228-residue chain is RNA chaperone ProQ (228 aa).

Positions 107-178 are disordered; the sequence is KARVQAQRAE…REEKHTPVSD (72 aa). 2 stretches are compositionally biased toward basic and acidic residues: residues 117 to 136 and 146 to 175; these read QQAK…DAPR and RRKE…KHTP.

It belongs to the ProQ family.

Its subcellular location is the cytoplasm. RNA chaperone with significant RNA binding, RNA strand exchange and RNA duplexing activities. May regulate ProP activity through an RNA-based, post-transcriptional mechanism. In Salmonella agona (strain SL483), this protein is RNA chaperone ProQ.